Reading from the N-terminus, the 391-residue chain is DNA-directed RNA polymerase subunit Rpo1C (391 aa).

It belongs to the RNA polymerase beta' chain family. In terms of assembly, part of the RNA polymerase complex.

It is found in the cytoplasm. The enzyme catalyses RNA(n) + a ribonucleoside 5'-triphosphate = RNA(n+1) + diphosphate. In terms of biological role, DNA-dependent RNA polymerase (RNAP) catalyzes the transcription of DNA into RNA using the four ribonucleoside triphosphates as substrates. Forms part of the jaw domain. The sequence is that of DNA-directed RNA polymerase subunit Rpo1C from Thermococcus gammatolerans (strain DSM 15229 / JCM 11827 / EJ3).